The primary structure comprises 282 residues: NH(3)-dependent NAD(+) synthetase (282 aa).

51–58 serves as a coordination point for ATP; the sequence is GISGGVDS. D57 serves as a coordination point for Mg(2+). R148 provides a ligand contact to deamido-NAD(+). T168 serves as a coordination point for ATP. A Mg(2+)-binding site is contributed by E173. Residues K181 and D188 each contribute to the deamido-NAD(+) site. Residues K197 and T219 each contribute to the ATP site. Residue 268-269 coordinates deamido-NAD(+); the sequence is HK.

The protein belongs to the NAD synthetase family. In terms of assembly, homodimer.

The catalysed reaction is deamido-NAD(+) + NH4(+) + ATP = AMP + diphosphate + NAD(+) + H(+). Its pathway is cofactor biosynthesis; NAD(+) biosynthesis; NAD(+) from deamido-NAD(+) (ammonia route): step 1/1. In terms of biological role, catalyzes the ATP-dependent amidation of deamido-NAD to form NAD. Uses ammonia as a nitrogen source. The chain is NH(3)-dependent NAD(+) synthetase from Burkholderia ambifaria (strain MC40-6).